The chain runs to 134 residues: Zinc finger protein 593 (134 aa).

Residues 1–25 show a composition bias toward basic residues; sequence MGRSRRTGAHRAHSLARQMKAKRRR. Disordered stretches follow at residues 1 to 57 and 82 to 134; these read MGRS…DLPG and SKDH…DTST. Residues 26–36 are compositionally biased toward basic and acidic residues; that stretch reads PDLDEIHRELR. The C2H2-type zinc finger occupies 61–85; it reads HRCLACARYFIDSTNLKTHFRSKDH.

This sequence belongs to the ZNF593/BUD20 C2H2-type zinc-finger protein family. In terms of assembly, associates with pre-60S ribosomal particles. Ubiquitous. Detected in spleen, prostate, testis, small intestine, colon and to a minor level in thymus and peripheral blood leukocytes.

It localises to the nucleus. The protein resides in the nucleolus. Its subcellular location is the cytoplasm. Involved in pre-60S ribosomal particles maturation by promoting the nuclear export of the 60S ribosome. Negatively modulates the DNA binding activity of Oct-2 and therefore its transcriptional regulatory activity. This is Zinc finger protein 593 (ZNF593) from Homo sapiens (Human).